Reading from the N-terminus, the 356-residue chain is Photosynthetic reaction center cytochrome c subunit (356 aa).

The first 20 residues, Met1–Gly20, serve as a signal peptide directing secretion. Cys21 carries the S-diacylglycerol cysteine lipid modification. Heme is bound by residues Met94, Cys107, Cys110, His111, Met130, His144, Cys152, Cys155, His156, Met253, Cys264, Cys267, His268, Cys325, Cys328, and His329.

Component of the photosynthetic reaction center composed of protein subunits L (PufL), M (PufM), H (PuhA) and cytochrome C (PufC). Post-translationally, binds 4 heme groups per subunit. In terms of processing, after the signal sequence is removed, the N-terminal cysteine is modified to form a diacylglyceride thioether, but the alpha-amino group is free and is not N-palmitoylated.

The protein resides in the cellular chromatophore membrane. In terms of biological role, the reaction center of purple bacteria contains a tightly bound cytochrome molecule which re-reduces the photo oxidized primary electron donor. This is Photosynthetic reaction center cytochrome c subunit from Blastochloris viridis (Rhodopseudomonas viridis).